The following is a 982-amino-acid chain: Bifunctional glutamine synthetase adenylyltransferase/adenylyl-removing enzyme (982 aa).

The tract at residues 1 to 460 (MSLPSLANLP…HFRQVIADPD (460 aa)) is adenylyl removase. An adenylyl transferase region spans residues 473-982 (GAEWIPLWEE…IRIWRELRLG (510 aa)).

Belongs to the GlnE family. Requires Mg(2+) as cofactor.

The catalysed reaction is [glutamine synthetase]-O(4)-(5'-adenylyl)-L-tyrosine + phosphate = [glutamine synthetase]-L-tyrosine + ADP. It catalyses the reaction [glutamine synthetase]-L-tyrosine + ATP = [glutamine synthetase]-O(4)-(5'-adenylyl)-L-tyrosine + diphosphate. Functionally, involved in the regulation of glutamine synthetase GlnA, a key enzyme in the process to assimilate ammonia. When cellular nitrogen levels are high, the C-terminal adenylyl transferase (AT) inactivates GlnA by covalent transfer of an adenylyl group from ATP to specific tyrosine residue of GlnA, thus reducing its activity. Conversely, when nitrogen levels are low, the N-terminal adenylyl removase (AR) activates GlnA by removing the adenylyl group by phosphorolysis, increasing its activity. The regulatory region of GlnE binds the signal transduction protein PII (GlnB) which indicates the nitrogen status of the cell. This is Bifunctional glutamine synthetase adenylyltransferase/adenylyl-removing enzyme from Pseudomonas aeruginosa (strain ATCC 15692 / DSM 22644 / CIP 104116 / JCM 14847 / LMG 12228 / 1C / PRS 101 / PAO1).